Reading from the N-terminus, the 574-residue chain is Squalene monooxygenase (574 aa).

Residues 1 to 20 (MWTFLGIATFTYFYKKFGDF) are Cytoplasmic-facing. The interval 1-100 (MWTFLGIATF…EQLEARRRRK (100 aa)) is interaction with MARCHF6. Residues 21–41 (ITLANREVLLCVLVFLSLGLV) lie within the membrane without spanning it. Residues 42–574 (LSYRCRHRNG…IYSEMKYMVH (533 aa)) are Cytoplasmic-facing. Residues 62–73 (QFALFSDILSGL) form a required for degradation in response to high membrane cholesterol levels region. The tract at residues 118 to 574 (TSSQNDPEVI…IYSEMKYMVH (457 aa)) is sufficient for enzyme activity. FAD-binding positions include 133-134 (VL), 153-154 (ER), arginine 161, phenylalanine 166, arginine 234, valine 250, aspartate 408, and methionine 421. Residues 516–574 (PLVLIGHFFAVAIYAVYFCFKSEPWITKPRALLSSGAVLYKACSVIFPLIYSEMKYMVH) form a hydrophobic; mediates interaction with membranes region.

This sequence belongs to the squalene monooxygenase family. In terms of assembly, interacts (via N-terminal domain) with MARCHF6. Interacts with SMIM22; this interaction modulates lipid droplet formation. FAD is required as a cofactor. In terms of processing, ubiquitinated by MARCHF6 in response to high cholesterol levels in intracellular membranes, leading to proteasomal degradation. In terms of tissue distribution, detected in liver (at protein level).

The protein localises to the microsome membrane. The protein resides in the endoplasmic reticulum membrane. It catalyses the reaction squalene + reduced [NADPH--hemoprotein reductase] + O2 = (S)-2,3-epoxysqualene + oxidized [NADPH--hemoprotein reductase] + H2O + H(+). Its pathway is terpene metabolism; lanosterol biosynthesis; lanosterol from farnesyl diphosphate: step 2/3. Its activity is regulated as follows. Inhibited by NB-598 ((E)N-ethyl-N-(6,6-dimethyl-2-hepten-4-ynyl)-3-[(3,3'-bi-thiophen-5-yl)methoxy]benzene-methanamine). Contrary to fungal enzymes, the mammalian enzyme is only slightly inhibited by terbinafine. Inhibited by tellurite, tellurium dioxide, selenite, and selenium dioxide. Functionally, catalyzes the stereospecific oxidation of squalene to (S)-2,3-epoxysqualene, and is considered to be a rate-limiting enzyme in steroid biosynthesis. This is Squalene monooxygenase (SQLE) from Homo sapiens (Human).